The sequence spans 143 residues: 3-hydroxyacyl-[acyl-carrier-protein] dehydratase FabZ (143 aa).

The active site involves histidine 48.

This sequence belongs to the thioester dehydratase family. FabZ subfamily.

Its subcellular location is the cytoplasm. It catalyses the reaction a (3R)-hydroxyacyl-[ACP] = a (2E)-enoyl-[ACP] + H2O. Its function is as follows. Involved in unsaturated fatty acids biosynthesis. Catalyzes the dehydration of short chain beta-hydroxyacyl-ACPs and long chain saturated and unsaturated beta-hydroxyacyl-ACPs. This chain is 3-hydroxyacyl-[acyl-carrier-protein] dehydratase FabZ, found in Roseiflexus castenholzii (strain DSM 13941 / HLO8).